Reading from the N-terminus, the 99-residue chain is DNA-directed RNA polymerase subunit omega (99 aa).

The protein belongs to the RNA polymerase subunit omega family. As to quaternary structure, the RNAP catalytic core consists of 2 alpha, 1 beta, 1 beta' and 1 omega subunit. When a sigma factor is associated with the core the holoenzyme is formed, which can initiate transcription.

The enzyme catalyses RNA(n) + a ribonucleoside 5'-triphosphate = RNA(n+1) + diphosphate. Its function is as follows. Promotes RNA polymerase assembly. Latches the N- and C-terminal regions of the beta' subunit thereby facilitating its interaction with the beta and alpha subunits. The protein is DNA-directed RNA polymerase subunit omega of Deinococcus geothermalis (strain DSM 11300 / CIP 105573 / AG-3a).